The following is a 396-amino-acid chain: MPDEASANPSRKIFLIATEESGDRLGSSLMKALRRRLGCSVRFEGVGGQTMAREGLVSLFPIEELSIMGFTAVVKQLPMIVRRIRGTADAVIAAAPDVLVIIDSPDFTHRVARRVRARCRGLPIVDYVSPSVWAWRSGRARAMRSYVDHVLALLPFEPEAYRRLGGPPCTYVGHPLLEQIGVLRPDAQERQRRDADPPTLLVLPGSRRSEIRHHLSVFGETIGMLQQSIPEIEVVLPTTPHLVDEITPAVATWPRRPRVVIGEDDKRAAFRVARAALAKSGTVTLELALAGVPMVAAYKAGSVEAWIARRVIRVSSVILANLVIRENVIPEFLQEDCVPGKLAPALQEILTDSPMRRRQLKAFDGLNTIMATGQRSPSELAADIVIEAMRESRARM.

The protein belongs to the LpxB family.

It catalyses the reaction a lipid X + a UDP-2-N,3-O-bis[(3R)-3-hydroxyacyl]-alpha-D-glucosamine = a lipid A disaccharide + UDP + H(+). Its pathway is bacterial outer membrane biogenesis; LPS lipid A biosynthesis. In terms of biological role, condensation of UDP-2,3-diacylglucosamine and 2,3-diacylglucosamine-1-phosphate to form lipid A disaccharide, a precursor of lipid A, a phosphorylated glycolipid that anchors the lipopolysaccharide to the outer membrane of the cell. The polypeptide is Lipid-A-disaccharide synthase (Nitrobacter winogradskyi (strain ATCC 25391 / DSM 10237 / CIP 104748 / NCIMB 11846 / Nb-255)).